We begin with the raw amino-acid sequence, 109 residues long: Death-associated protein-like 1 homolog (109 aa).

2 disordered regions span residues 1–51 (MVQL…KPRS) and 76–100 (FPET…ISRI). Residues 31 to 50 (KSADENANVEKETRKTDKPR) show a composition bias toward basic and acidic residues.

It belongs to the DAP-DAPL1 family. As to quaternary structure, associates with ribosomes; preventing translation. Interacts with eiF5a (eif5a and eif5a2); preventing translation.

Its function is as follows. Ribosome-binding protein that promotes ribosome hibernation, a process during which ribosomes are stabilized in an inactive state and preserved from proteasomal degradation. Acts via its association with eiF5a (eif5a and eif5a2) at the polypeptide exit tunnel of the ribosome, preventing mRNA translation. Plays a key role in ribosome hibernation in the mature egg by preventing mRNA translation, leading to ribosome inactivation. Ribosomes, which are produced in large quantities during oogenesis, are stored and translationally repressed in the egg and early embryo. The protein is Death-associated protein-like 1 homolog of Danio rerio (Zebrafish).